The sequence spans 569 residues: TBCC domain-containing protein 1 (569 aa).

In terms of domain architecture, C-CAP/cofactor C-like spans Pro-304–Leu-435.

This sequence belongs to the TBCC family.

The protein localises to the cytoplasm. Its subcellular location is the cytoskeleton. The protein resides in the microtubule organizing center. It is found in the centrosome. It localises to the spindle pole. Plays a role in the regulation of centrosome and Golgi apparatus positioning, with consequences on cell shape and cell migration. In Rattus norvegicus (Rat), this protein is TBCC domain-containing protein 1 (Tbccd1).